Consider the following 567-residue polypeptide: Lipase maturation factor 1 (567 aa).

The disordered stretch occupies residues 1 to 39 (MRPDSPTMAAPAESLRRRKTGYSDPEPESPPAPGRGPAG). Over 1–49 (MRPDSPTMAAPAESLRRRKTGYSDPEPESPPAPGRGPAGSPAHLHTGTF) the chain is Cytoplasmic. A helical membrane pass occupies residues 50 to 72 (WLTRIVLLKALAFVYFVAFLVAF). Residues 73–127 (HQNKQLIGDRGLLPCRVFLKNFQQYFQDRTSWEVFSYMPTILWLMDWSDMNSNLD) are Lumenal-facing. Residues 128 to 151 (LLALLGLGISSFVLITGCANMLLM) traverse the membrane as a helical segment. Residues 152 to 207 (AALWGLYMSLVNVGHVWYSFGWESQLLETGFLGIFLCPLWTLSRLPQHTPTSRIVL) are Cytoplasmic-facing. Residues 208–221 (WGFRWLIFRIMLGA) traverse the membrane as a helical segment. Residues 222 to 292 (GLIKIRGDRC…LGRRACIIHG (71 aa)) lie on the Lumenal side of the membrane. Residues 293-321 (VLQILFQAVLIVSGNLSFLNWLTMVPSLA) traverse the membrane as a helical segment. Residues 322–367 (CFDDATLGFLFPSGPGSLKDRVLQMQRDIRGARPEPRFGSVVRRAA) lie on the Cytoplasmic side of the membrane. A helical transmembrane segment spans residues 368 to 388 (NVSLGVLLAWLSVPVVLNLLS). Residues 389 to 567 (SRQVMNTHFN…DRGWPLPGPL (179 aa)) lie on the Lumenal side of the membrane.

This sequence belongs to the lipase maturation factor family. In terms of assembly, interacts with LPL and SEL1L.

It localises to the endoplasmic reticulum membrane. Its function is as follows. Involved in the maturation of specific proteins in the endoplasmic reticulum. Required for maturation and transport of active lipoprotein lipase (LPL) through the secretory pathway. Each LMF1 molecule chaperones 50 or more molecules of LPL. The chain is Lipase maturation factor 1 (LMF1) from Homo sapiens (Human).